The sequence spans 102 residues: Small integral membrane protein 29 (102 aa).

An N-linked (GlcNAc...) asparagine glycan is attached at asparagine 3. The chain crosses the membrane as a helical span at residues 21–41 (VLGPFFLITLVGVVVAVVMYV).

Its subcellular location is the membrane. The polypeptide is Small integral membrane protein 29 (Mus musculus (Mouse)).